A 624-amino-acid chain; its full sequence is tRNA uridine 5-carboxymethylaminomethyl modification enzyme MnmG (624 aa).

Residues 13 to 18 (GGGHAG), Val-125, and Ser-180 each bind FAD. 273-287 (GPRYCPSIEDKIVRF) provides a ligand contact to NAD(+). FAD is bound at residue Gln-370.

This sequence belongs to the MnmG family. Homodimer. Heterotetramer of two MnmE and two MnmG subunits. It depends on FAD as a cofactor.

It localises to the cytoplasm. Functionally, NAD-binding protein involved in the addition of a carboxymethylaminomethyl (cmnm) group at the wobble position (U34) of certain tRNAs, forming tRNA-cmnm(5)s(2)U34. The protein is tRNA uridine 5-carboxymethylaminomethyl modification enzyme MnmG of Legionella pneumophila (strain Corby).